The sequence spans 53 residues: UPF0391 membrane protein TM1040_2720 (53 aa).

2 consecutive transmembrane segments (helical) span residues Trp4 to Ala24 and Gly29 to Leu48.

Belongs to the UPF0391 family.

Its subcellular location is the cell membrane. The polypeptide is UPF0391 membrane protein TM1040_2720 (Ruegeria sp. (strain TM1040) (Silicibacter sp.)).